Reading from the N-terminus, the 353-residue chain is Phosphoribosylformylglycinamidine cyclo-ligase (353 aa).

The protein belongs to the AIR synthase family.

It is found in the cytoplasm. It catalyses the reaction 2-formamido-N(1)-(5-O-phospho-beta-D-ribosyl)acetamidine + ATP = 5-amino-1-(5-phospho-beta-D-ribosyl)imidazole + ADP + phosphate + H(+). It functions in the pathway purine metabolism; IMP biosynthesis via de novo pathway; 5-amino-1-(5-phospho-D-ribosyl)imidazole from N(2)-formyl-N(1)-(5-phospho-D-ribosyl)glycinamide: step 2/2. This chain is Phosphoribosylformylglycinamidine cyclo-ligase, found in Pseudomonas aeruginosa (strain LESB58).